The chain runs to 168 residues: Xanthine-guanine phosphoribosyltransferase (168 aa).

Residues 43–44 (RG) and 102–110 (DDLVDTGAT) each bind 5-phospho-alpha-D-ribose 1-diphosphate. Aspartate 103 contributes to the Mg(2+) binding site. Residues aspartate 106 and isoleucine 149 each contribute to the guanine site. The xanthine site is built by aspartate 106 and isoleucine 149. Residues 106-110 (DTGAT) and 148-149 (WI) contribute to the GMP site.

The protein belongs to the purine/pyrimidine phosphoribosyltransferase family. XGPT subfamily. Homotetramer. It depends on Mg(2+) as a cofactor.

The protein resides in the cell inner membrane. The catalysed reaction is GMP + diphosphate = guanine + 5-phospho-alpha-D-ribose 1-diphosphate. It catalyses the reaction XMP + diphosphate = xanthine + 5-phospho-alpha-D-ribose 1-diphosphate. The enzyme catalyses IMP + diphosphate = hypoxanthine + 5-phospho-alpha-D-ribose 1-diphosphate. It participates in purine metabolism; GMP biosynthesis via salvage pathway; GMP from guanine: step 1/1. It functions in the pathway purine metabolism; XMP biosynthesis via salvage pathway; XMP from xanthine: step 1/1. Purine salvage pathway enzyme that catalyzes the transfer of the ribosyl-5-phosphate group from 5-phospho-alpha-D-ribose 1-diphosphate (PRPP) to the N9 position of the 6-oxopurines guanine and xanthine to form the corresponding ribonucleotides GMP (guanosine 5'-monophosphate) and XMP (xanthosine 5'-monophosphate), with the release of PPi. To a lesser extent, also acts on hypoxanthine. The sequence is that of Xanthine-guanine phosphoribosyltransferase from Nitrobacter winogradskyi (strain ATCC 25391 / DSM 10237 / CIP 104748 / NCIMB 11846 / Nb-255).